The chain runs to 318 residues: WRKY transcription factor 28 (318 aa).

Composition is skewed to polar residues over residues 74-84 and 106-115; these read SSEVFNSSIDQ and RVSPSNSSSS. Residues 74–158 form a disordered region; that stretch reads SSEVFNSSID…KTEVKKQREP (85 aa). 2 stretches are compositionally biased toward basic and acidic residues: residues 116–126 and 148–158; these read EADHPGEDSGK and KKTEVKKQREP. A DNA-binding region (WRKY) is located at residues 166 to 231; sequence SEVDHLEDGY…YEGQHNHPIP (66 aa).

This sequence belongs to the WRKY group II-c family.

The protein localises to the nucleus. Transcription factor. Interacts specifically with the W box (5'-(T)TGAC[CT]-3'), a frequently occurring elicitor-responsive cis-acting element. The protein is WRKY transcription factor 28 (WRKY28) of Arabidopsis thaliana (Mouse-ear cress).